Here is a 612-residue protein sequence, read N- to C-terminus: Bifunctional lycopene cyclase/phytoene synthase (612 aa).

The interval 1-268 (MGWEYAQVHL…IVFGLIACDN (268 aa)) is lycopene beta-cyclase. A run of 7 helical transmembrane segments spans residues 3 to 23 (WEYA…LAAV), 31 to 51 (LDVF…VKGL), 112 to 130 (LFFF…MILS), 148 to 168 (IAGQ…VSSG), 171 to 191 (GMYM…LWSI), 203 to 223 (NTAL…TFAL), and 246 to 266 (IEEA…LIAC). The tract at residues 275–612 (TFPEHFPRTK…IRVAWSALNK (338 aa)) is phytoene synthase.

In the N-terminal section; belongs to the lycopene beta-cyclase family. This sequence in the C-terminal section; belongs to the phytoene/squalene synthase family.

It localises to the membrane. It catalyses the reaction all-trans-lycopene = gamma-carotene. The enzyme catalyses gamma-carotene = all-trans-beta-carotene. The catalysed reaction is 2 (2E,6E,10E)-geranylgeranyl diphosphate = 15-cis-phytoene + 2 diphosphate. The protein operates within carotenoid biosynthesis; beta-carotene biosynthesis. Its pathway is carotenoid biosynthesis; phytoene biosynthesis; all-trans-phytoene from geranylgeranyl diphosphate: step 1/1. Functionally, bifunctional enzyme; part of the car gene cluster that mediates the biosynthesis of neurosporaxanthin, a carboxylic apocarotenoid acting as an essential protective pigments and leading to orange pigmentation. CarAR catalyzes the first step of the pathway by converting geranylgeranyl diphosphate to phytoene, as well as the later cyclization step that transforms the carB product lycopene into gamma-carotene. CarAR also converts part of gamma-carotene into beta-carotene. Neurosporaxanthin is synthesized from geranyl-geranyl pyrophosphate (GGPP) through several enzymatic activities. Phytoene synthase activity performed by the bifunctional enzyme carAR first produces phytoene from geranyl-geranyl pyrophosphate (GGPP). The phytoene dehydrogenase carB then introduces 4 desaturations to lead to lycopene which is substrate of the carotene cyclase activity of carAR that leads to the production of gamma-carotene. CarB then performs a 5th desaturation reaction to yield torulene. Torulene is the substrate of the dioxidase carT that breaks the molecule, removing five carbon atoms to yield beta-apo-4'-carotenal, whereas the aldehyde dehydrogenase carD mediates the last step by converting beta-apo-4'-carotenal into neurosporaxanthin. This Fusarium fujikuroi (Bakanae and foot rot disease fungus) protein is Bifunctional lycopene cyclase/phytoene synthase.